Reading from the N-terminus, the 118-residue chain is Sporulation protein YjcA (118 aa).

Helical transmembrane passes span 8–28, 62–82, and 92–112; these read IVLL…DTIM, FIGE…GFLI, and AQWL…ETLV.

This sequence belongs to the UPF0713 family.

The protein localises to the cell membrane. Its function is as follows. Involved in sporulation. The chain is Sporulation protein YjcA (yjcA) from Bacillus subtilis (strain 168).